Reading from the N-terminus, the 228-residue chain is CD9 antigen (228 aa).

Over 2-12 the chain is Cytoplasmic; it reads PVKGGTKCIKY. Cys9 carries the S-palmitoyl cysteine lipid modification. The chain crosses the membrane as a helical span at residues 13 to 33; the sequence is LLFGFNFIFWLAGIAVLAIGL. The Extracellular portion of the chain corresponds to 34–55; the sequence is WLRFDSQTKSIFEQETNNNNSS. Residues Asn52 and Asn53 are each glycosylated (N-linked (GlcNAc...) asparagine). Residues 56–76 form a helical membrane-spanning segment; that stretch reads FYTGVYILIGAGALMMLVGFL. At 77 to 87 the chain is on the cytoplasmic side; sequence GCCGAVQESQC. 3 S-palmitoyl cysteine lipidation sites follow: Cys78, Cys79, and Cys87. Residues 88–111 form a helical membrane-spanning segment; the sequence is MLGLFFGFLLVIFAIEIAAAIWGY. At 112-195 the chain is on the extracellular side; the sequence is SHKDEVIKEV…KEVFDNKFHI (84 aa). 2 cysteine pairs are disulfide-bonded: Cys152–Cys181 and Cys153–Cys167. The chain crosses the membrane as a helical span at residues 196 to 221; sequence IGAVGIGIAVVMIFGMIFSMILCCAI. S-palmitoyl cysteine attachment occurs at residues Cys218 and Cys219. Topologically, residues 222–228 are cytoplasmic; sequence RRNREMV.

Belongs to the tetraspanin (TM4SF) family. Forms both disulfide-linked homodimers and higher homooligomers as well as heterooligomers with other members of the tetraspanin family. Interacts (via the second extracellular domain) with integrin ITGAV:ITGB3. Interacts with integrin ITGA6:ITGB1; interaction takes place in oocytes and is involved in sperm-egg fusion. Part of integrin-tetraspanin complexes composed of CD81, beta-1 and beta-2 integrins in the membrane of monocyte/macrophages. Interacts with CD63; identified in a complex with CD63 and ITGB3. Associates with CR2/CD21 and with PTGFRN/CD9P1. Part of a complex composed of CD9, CD81, PTGFRN and IGSF8. Interacts directly with IGSF8. Interacts with PDPN; this interaction is homophilic and attenuates platelet aggregation and pulmonary metastasis induced by PDPN. Interacts (on T cell side) with CD81 at immunological synapses between antigen-presenting cells and T cells. Post-translationally, palmitoylated at a low, basal level in unstimulated platelets. The level of palmitoylation increases when platelets are activated by thrombin (in vitro). The protein exists in three forms with molecular masses between 22 and 27 kDa, and is known to carry covalently linked fatty acids. Palmitoylation by ZDHHC2 regulates CD9 expression, association with other tetraspanin family proteins and function in cell adhesion. As to expression, detected in platelets (at protein level). Expressed by a variety of hematopoietic and epithelial cells.

It is found in the cell membrane. It localises to the membrane. The protein localises to the secreted. The protein resides in the extracellular exosome. In terms of biological role, integral membrane protein associated with integrins, which regulates different processes, such as sperm-egg fusion, platelet activation and aggregation, and cell adhesion. Present at the cell surface of oocytes and plays a key role in sperm-egg fusion, possibly by organizing multiprotein complexes and the morphology of the membrane required for the fusion. In myoblasts, associates with CD81 and PTGFRN and inhibits myotube fusion during muscle regeneration. In macrophages, associates with CD81 and beta-1 and beta-2 integrins, and prevents macrophage fusion into multinucleated giant cells specialized in ingesting complement-opsonized large particles. Also prevents the fusion between mononuclear cell progenitors into osteoclasts in charge of bone resorption. Acts as a receptor for PSG17. Involved in platelet activation and aggregation. Regulates paranodal junction formation. Involved in cell adhesion, cell motility and tumor metastasis. This chain is CD9 antigen, found in Homo sapiens (Human).